We begin with the raw amino-acid sequence, 287 residues long: Acetylglutamate kinase (287 aa).

Residues 70–71, arginine 92, and asparagine 184 each bind substrate; that span reads GG.

It belongs to the acetylglutamate kinase family. ArgB subfamily.

It is found in the cytoplasm. The enzyme catalyses N-acetyl-L-glutamate + ATP = N-acetyl-L-glutamyl 5-phosphate + ADP. It participates in amino-acid biosynthesis; L-arginine biosynthesis; N(2)-acetyl-L-ornithine from L-glutamate: step 2/4. Its function is as follows. Catalyzes the ATP-dependent phosphorylation of N-acetyl-L-glutamate. This chain is Acetylglutamate kinase, found in Ruegeria pomeroyi (strain ATCC 700808 / DSM 15171 / DSS-3) (Silicibacter pomeroyi).